We begin with the raw amino-acid sequence, 474 residues long: tRNA-2-methylthio-N(6)-dimethylallyladenosine synthase (474 aa).

The region spanning 3-120 (QKLHIKTWGC…LPEMINQIRG (118 aa)) is the MTTase N-terminal domain. [4Fe-4S] cluster-binding residues include Cys-12, Cys-49, Cys-83, Cys-157, Cys-161, and Cys-164. One can recognise a Radical SAM core domain in the interval 143–375 (RAEGPTAFVS…QQRINNQAAQ (233 aa)). Residues 378–441 (RAMLGTEQRV…TNSLRGEVVR (64 aa)) form the TRAM domain.

This sequence belongs to the methylthiotransferase family. MiaB subfamily. As to quaternary structure, monomer. [4Fe-4S] cluster is required as a cofactor.

The protein localises to the cytoplasm. The catalysed reaction is N(6)-dimethylallyladenosine(37) in tRNA + (sulfur carrier)-SH + AH2 + 2 S-adenosyl-L-methionine = 2-methylsulfanyl-N(6)-dimethylallyladenosine(37) in tRNA + (sulfur carrier)-H + 5'-deoxyadenosine + L-methionine + A + S-adenosyl-L-homocysteine + 2 H(+). Catalyzes the methylthiolation of N6-(dimethylallyl)adenosine (i(6)A), leading to the formation of 2-methylthio-N6-(dimethylallyl)adenosine (ms(2)i(6)A) at position 37 in tRNAs that read codons beginning with uridine. The protein is tRNA-2-methylthio-N(6)-dimethylallyladenosine synthase of Histophilus somni (strain 129Pt) (Haemophilus somnus).